A 361-amino-acid chain; its full sequence is MSQTYQQQLQSKIERITHQFAEFNPPALEVFESPEQHFRMRAEFRIWHTDNDLFYAMFERNEDGKQKEVIRVDEFPIADQSINQLMPRLLEELKANPTLSQRIFEADFLTTLSGEMLVTLIYHRKLDTEWESAAKALAEKLNIKIMGRSRGQKVIIGDDYVVEQLNVHGRTFKYKQIESSFTQPNAEVCQKMLTWACDVIQGSNQDLLELYCGNGNFTLPLSLHFRRVLATELAKSSVYAAQWNIEQNQIENIQIARLSAEEFTQAYQGEREFRRLQEANIDIQSYEFDTIFVDPPRAGIDDETLKLLKGFKRILYISCNPDTLYNNLKTLSQTHKITRFALFDQFPFTHHVESGVLLELI.

The S-adenosyl-L-methionine site is built by Q183, Y211, N216, E232, and D294. C319 (nucleophile) is an active-site residue. The Proton acceptor role is filled by E353.

Belongs to the class I-like SAM-binding methyltransferase superfamily. RNA M5U methyltransferase family. TrmA subfamily.

It catalyses the reaction uridine(54) in tRNA + S-adenosyl-L-methionine = 5-methyluridine(54) in tRNA + S-adenosyl-L-homocysteine + H(+). The catalysed reaction is uridine(341) in tmRNA + S-adenosyl-L-methionine = 5-methyluridine(341) in tmRNA + S-adenosyl-L-homocysteine + H(+). In terms of biological role, dual-specificity methyltransferase that catalyzes the formation of 5-methyluridine at position 54 (m5U54) in all tRNAs, and that of position 341 (m5U341) in tmRNA (transfer-mRNA). The chain is tRNA/tmRNA (uracil-C(5))-methyltransferase from Acinetobacter baylyi (strain ATCC 33305 / BD413 / ADP1).